The primary structure comprises 169 residues: Cell division inhibitor SulA (169 aa).

The interval 106 to 112 (ALRTGNY) is ftsZ binding. The lon protease binding stretch occupies residues 162–169 (KIHSNLYH).

This sequence belongs to the SulA family. As to quaternary structure, interacts with FtsZ. Post-translationally, is rapidly cleaved and degraded by the Lon protease once DNA damage is repaired.

In terms of biological role, component of the SOS system and an inhibitor of cell division. Accumulation of SulA causes rapid cessation of cell division and the appearance of long, non-septate filaments. In the presence of GTP, binds a polymerization-competent form of FtsZ in a 1:1 ratio, thus inhibiting FtsZ polymerization and therefore preventing it from participating in the assembly of the Z ring. This mechanism prevents the premature segregation of damaged DNA to daughter cells during cell division. In Escherichia coli O7:K1 (strain IAI39 / ExPEC), this protein is Cell division inhibitor SulA.